The following is an 862-amino-acid chain: MFSAKAKTYELKLEQTRCNGDWQAIPEVARKLHKHNSSKSFVCELAKIEASLKSALTAELKNIANVLEPKLIDNQYSLIPALPSARTDPLLSQLNSLNIQNATEDEKLQETSIRLLLYIVQRKFPEAVDLDWSPQGIPWTETSTGICILQATVLSSLAQYAQANDEVAYQYVRSAIGLIQNANIGKKPLPELTRWCDLAYSLYAQMSVSACSSQLERANILTTCLSYFTEHKSVNLLYKLVTSRQAIKYLEHILRTNTNGSKIFTKSPVKNLYLNWPQLVLDYGSLLCNFTSFPKAGDQNMFAVEFIELATSIWINTEKSYDITVSLIRMLYQLTGKCFQAQQIFRSLVFFLRHIEEFEEASEAFEIYKFLCVKSHERLARKNSDVAGSFSDIKPVFVDEPKSIIEVCSVMMTVYAQYLRNLKKVSEILDYITKIASDYDLLKRDDIAPLIYHTEGVAYSFMYYQANNPSLRERYHQKSVQSYQKCLEKQPTNTNALFHLAMQYSERRAITDAMQIVRRLLEVNPKYSIVSWHLLVLCVSCSEQYAAGIKLIDSVFETWGINHVNEDGTIEISLTNLTFNDRCALVDLLITKLALFEAEKGVEATLDIQDEIFTLFASIFDLNEYRISKEGSSDELSTLLERSTIQSIKSSKKISKDVENEKGSILGFSRKSSLKRSTVLSKKSHSSYKENFQLRRGKTVSYLNQKLWLTAASLFLKSGNDDQARSALLEAKKIDHECAWVYYLNGLSLLQQGKEVEGYEQLDVAHYLDPEDPLISTALAKCLLQGGYGPMHSRRNRADAILSSCTLQYGWDLPEAWYYTAEIFRQLGDLKQAAFSYDYCIQLADTNPVRRWSNLQPRFMNV.

TPR repeat units lie at residues 342–377, 460–493, and 494–527; these read QQIF…KSHE, SFMY…QPTN, and TNAL…NPKY. Phosphoserine is present on residues S632, S633, and S637. TPR repeat units lie at residues 665-698, 705-738, 740-772, and 814-847; these read ILGF…RRGK, QKLW…DHEC, WVYY…DPED, and PEAW…ADTN.

This sequence belongs to the YPP1 family.

The protein localises to the cytoplasm. Functionally, involved in endocytosis. The sequence is that of Putative cargo-transport protein ypp1 (ypp1) from Schizosaccharomyces pombe (strain 972 / ATCC 24843) (Fission yeast).